A 203-amino-acid polypeptide reads, in one-letter code: Putative 3-methyladenine DNA glycosylase (203 aa).

Belongs to the DNA glycosylase MPG family.

This chain is Putative 3-methyladenine DNA glycosylase, found in Clostridium botulinum (strain Loch Maree / Type A3).